We begin with the raw amino-acid sequence, 201 residues long: Small ribosomal subunit protein uS4c (201 aa).

Residues 1-14 (MSRYRGPRFKKIRR) show a composition bias toward basic residues. The segment at 1–44 (MSRYRGPRFKKIRRLGALPGLTSKRPRAGSDPRNQSRSGKKSQY) is disordered. The S4 RNA-binding domain occupies 89-152 (MRLDNTLFRL…NSRTLVQNLL (64 aa)).

It belongs to the universal ribosomal protein uS4 family. In terms of assembly, part of the 30S ribosomal subunit. Contacts protein S5. The interaction surface between S4 and S5 is involved in control of translational fidelity.

The protein resides in the plastid. Its subcellular location is the chloroplast. Its function is as follows. One of the primary rRNA binding proteins, it binds directly to 16S rRNA where it nucleates assembly of the body of the 30S subunit. Functionally, with S5 and S12 plays an important role in translational accuracy. The polypeptide is Small ribosomal subunit protein uS4c (rps4) (Draba nemorosa (Woodland whitlowgrass)).